Reading from the N-terminus, the 202-residue chain is FMN-dependent NADH:quinone oxidoreductase (202 aa).

Residues S10 and 95–98 contribute to the FMN site; that span reads MYNF.

It belongs to the azoreductase type 1 family. As to quaternary structure, homodimer. Requires FMN as cofactor.

The catalysed reaction is 2 a quinone + NADH + H(+) = 2 a 1,4-benzosemiquinone + NAD(+). The enzyme catalyses N,N-dimethyl-1,4-phenylenediamine + anthranilate + 2 NAD(+) = 2-(4-dimethylaminophenyl)diazenylbenzoate + 2 NADH + 2 H(+). Its function is as follows. Quinone reductase that provides resistance to thiol-specific stress caused by electrophilic quinones. Functionally, also exhibits azoreductase activity. Catalyzes the reductive cleavage of the azo bond in aromatic azo compounds to the corresponding amines. This Pseudoalteromonas atlantica (strain T6c / ATCC BAA-1087) protein is FMN-dependent NADH:quinone oxidoreductase.